A 134-amino-acid chain; its full sequence is Small ribosomal subunit protein bS6 (134 aa).

Basic and acidic residues predominate over residues Asn113–Pro122. Positions Asn113–Asn134 are disordered.

Belongs to the bacterial ribosomal protein bS6 family.

Binds together with bS18 to 16S ribosomal RNA. The polypeptide is Small ribosomal subunit protein bS6 (Borrelia duttonii (strain Ly)).